Consider the following 315-residue polypeptide: Transmembrane protein 248 (315 aa).

A helical transmembrane segment spans residues 22 to 42; the sequence is VIFMVSVSGMAIAFLTLGYFF. Residues 82 to 103 are compositionally biased toward polar residues; the sequence is ETTPPESTVTSGQARSSTQTPQ. The interval 82 to 106 is disordered; that stretch reads ETTPPESTVTSGQARSSTQTPQALE. The next 2 membrane-spanning stretches (helical) occupy residues 180-200 and 271-291; these read QVVF…PVTV and LMDT…YAVI.

This sequence belongs to the TMEM248 family.

It is found in the membrane. This Xenopus tropicalis (Western clawed frog) protein is Transmembrane protein 248 (tmem248).